The primary structure comprises 50 residues: Conotoxin Bu13 (50 aa).

Residue Ala-1 is a signal peptide. Residues 2–24 (EDSRGTQLHRALRKTTKLSLSIR) constitute a propeptide that is removed on maturation. 3 cysteine pairs are disulfide-bonded: Cys-25-Cys-40, Cys-32-Cys-44, and Cys-39-Cys-49.

Belongs to the conotoxin O1 superfamily. Expressed by the venom duct.

The protein resides in the secreted. The sequence is that of Conotoxin Bu13 from Conus bullatus (Bubble cone).